The chain runs to 142 residues: MFQGASSLNLDAKGRMTIPSRHRDALLLQCEGRVTLTKHPHGCLLFFPRPVWESHREQIAAWPMSARAWQRIFLGNASDVEMDGAGRILIAPELRSAVGMTRDVMLLGMGSHFEIWDATKLAESEAAAVANGMPDVLNDFSF.

2 SpoVT-AbrB domains span residues 5–51 (ASSL…PRPV) and 77–120 (ASDV…DATK).

It belongs to the MraZ family. As to quaternary structure, forms oligomers.

The protein localises to the cytoplasm. The protein resides in the nucleoid. The protein is Transcriptional regulator MraZ of Janthinobacterium sp. (strain Marseille) (Minibacterium massiliensis).